Reading from the N-terminus, the 160-residue chain is UPF0479 membrane protein YLL066W-A (160 aa).

The next 2 helical transmembrane spans lie at 39 to 59 (IVFC…KVLQ) and 136 to 156 (VPMI…ISQH).

It belongs to the UPF0479 family.

Its subcellular location is the membrane. The polypeptide is UPF0479 membrane protein YLL066W-A (Saccharomyces cerevisiae (strain ATCC 204508 / S288c) (Baker's yeast)).